A 221-amino-acid polypeptide reads, in one-letter code: Serine/arginine-rich splicing factor 2 (221 aa).

Ser-2 bears the N-acetylserine mark. Ser-2 carries the post-translational modification Phosphoserine. The 79-residue stretch at Thr-14–Tyr-92 folds into the RRM domain. 2 positions are modified to phosphothreonine: Thr-22 and Thr-25. At Ser-26 the chain carries Phosphoserine. Lys-52 bears the N6-acetyllysine mark. The interval Tyr-92–Ser-221 is disordered. Composition is skewed to basic residues over residues Arg-117–Ser-171 and Ser-179–Ser-189. Phosphoserine is present on residues Ser-189, Ser-191, Ser-204, Ser-206, Ser-208, Ser-212, and Ser-220.

Belongs to the splicing factor SR family. As to quaternary structure, in vitro, self-associates and binds SRSF1/SFRS1 (ASF/SF2), SNRNP70 and U2AF1 but not U2AF2. Binds SREK1/SFRS12. Interacts with CCNL1 and CCNL2. Interacts with SCAF11. Interacts with ZRSR2/U2AF1-RS2. Interacts with CCDC55 (via C-terminus). Interacts with BRDT. In terms of processing, extensively phosphorylated on serine residues in the RS domain. Phosphorylated by SRPK2 and this causes its redistribution from the nuclear speckle to nucleoplasm and controls cell fate decision in response to cisplatin treatment. KAT5/TIP60 inhibits its phosphorylation by preventing SRPK2 nuclear translocation. Acetylation on Lys-52 by KAT5/TIP60 promotes its proteasomal degradation. This effect is counterbalanced by HDAC6, which positively controls SRSF2 protein level by deacetylating it and preventing its proteasomal degradation.

It localises to the nucleus. The protein localises to the nucleoplasm. The protein resides in the nucleus speckle. Its function is as follows. Necessary for the splicing of pre-mRNA. It is required for formation of the earliest ATP-dependent splicing complex and interacts with spliceosomal components bound to both the 5'- and 3'-splice sites during spliceosome assembly. It also is required for ATP-dependent interactions of both U1 and U2 snRNPs with pre-mRNA. Interacts with other spliceosomal components, via the RS domains, to form a bridge between the 5'- and 3'-splice site binding components, U1 snRNP and U2AF. Binds to purine-rich RNA sequences, either 5'-AGSAGAGTA-3' (S=C or G) or 5'-GTTCGAGTA-3'. Can bind to beta-globin mRNA and commit it to the splicing pathway. The phosphorylated form (by SRPK2) is required for cellular apoptosis in response to cisplatin treatment. The chain is Serine/arginine-rich splicing factor 2 (SRSF2) from Sus scrofa (Pig).